A 121-amino-acid polypeptide reads, in one-letter code: Non-specific lipid-transfer protein 9 (121 aa).

An N-terminal signal peptide occupies residues 1-27; the sequence is MRKSISIAFVIAITIFMSHLNVFTVYS. Disulfide bonds link C31–C80, C41–C57, C58–C102, and C78–C116.

This sequence belongs to the plant LTP family.

Functionally, plant non-specific lipid-transfer proteins transfer phospholipids as well as galactolipids across membranes. May play a role in wax or cutin deposition in the cell walls of expanding epidermal cells and certain secretory tissues. This Arabidopsis thaliana (Mouse-ear cress) protein is Non-specific lipid-transfer protein 9 (LTP9).